The sequence spans 728 residues: MSDRIDRDVINALIAGHFADPFSVLGMHKTTAGLEVRALLPDATDVWVIEPKTGRKLAKLECLDSRGFFSGVIPRRKNFFRYQLAVVWHGQQNLIDDPYRFGPLIQEMDAWLLSEGTHLRPYETLGAHADTMDGVTGTRFSVWAPNARRVSVVGQFNYWDGRRHPMRLRKESGIWELFIPGAHNGQLYKYEMIDANGNLRLKSDPYAFEAQMRPETASLICSLPEKVVQTEERKKANQFDAPISIYEVHLGSWRRHTDNNFWLSYRELADQLVPYAKWMGFTHLELLPINEHPFDGSWGYQPTGLYAPTRRFGTRDDFRYFIDAAHAAGLNVILDWVPGHFPTDDFALAEFDGTNLYEHSDPREGYHQDWNTLIYNYGRREVSNFLVGNALYWIERFGIDALRVDAVASMIYRDYSRKEGEWIPNEFGGRENLEAIEFLRNTNRILGEQVSGAVTMAEESTDFPGVSRPQDMGGLGFWYKWNLGWMHDTLDYMKLDPIYRQYHHDKLTFGMLYNYTENFVLPLSHDEVVHGKKSILDRMPGDAWQKFANLRAYYGWMWAFPGKKLLFMGNEFAQGREWNHDASLDWHLLEGGDNWHHGVQRLVRDLNHTYRHHKAMHELDFDPYGFEWLVVDDKERSVLIFVRRDKEGNEIIVASNFTPVPRHDYRFGINQPGKWREILNTDSMHYHGSNAGNGGAVHSDEIASHGRQHSLSLTLPPLATIWLVREAE.

The active-site Nucleophile is Asp-405. Glu-458 functions as the Proton donor in the catalytic mechanism.

Belongs to the glycosyl hydrolase 13 family. GlgB subfamily. As to quaternary structure, monomer.

It carries out the reaction Transfers a segment of a (1-&gt;4)-alpha-D-glucan chain to a primary hydroxy group in a similar glucan chain.. The protein operates within glycan biosynthesis; glycogen biosynthesis. Its function is as follows. Catalyzes the formation of the alpha-1,6-glucosidic linkages in glycogen by scission of a 1,4-alpha-linked oligosaccharide from growing alpha-1,4-glucan chains and the subsequent attachment of the oligosaccharide to the alpha-1,6 position. The chain is 1,4-alpha-glucan branching enzyme GlgB from Escherichia coli O6:H1 (strain CFT073 / ATCC 700928 / UPEC).